Reading from the N-terminus, the 64-residue chain is Large ribosomal subunit protein bL35 (64 aa).

It belongs to the bacterial ribosomal protein bL35 family.

The chain is Large ribosomal subunit protein bL35 from Carboxydothermus hydrogenoformans (strain ATCC BAA-161 / DSM 6008 / Z-2901).